We begin with the raw amino-acid sequence, 465 residues long: Ribulose bisphosphate carboxylase large chain (465 aa).

The residue at position 4 (K4) is an N6,N6,N6-trimethyllysine. Positions 113 and 163 each coordinate substrate. The active-site Proton acceptor is K165. K167 is a binding site for substrate. Residues K191, D193, and E194 each contribute to the Mg(2+) site. N6-carboxylysine is present on K191. H284 functions as the Proton acceptor in the catalytic mechanism. Residues R285, H317, and S369 each contribute to the substrate site.

The protein belongs to the RuBisCO large chain family. Type I subfamily. In terms of assembly, heterohexadecamer of 8 large chains and 8 small chains; disulfide-linked. The disulfide link is formed within the large subunit homodimers. Mg(2+) is required as a cofactor. Post-translationally, the disulfide bond which can form in the large chain dimeric partners within the hexadecamer appears to be associated with oxidative stress and protein turnover.

The protein resides in the plastid. The protein localises to the chloroplast. It catalyses the reaction 2 (2R)-3-phosphoglycerate + 2 H(+) = D-ribulose 1,5-bisphosphate + CO2 + H2O. The catalysed reaction is D-ribulose 1,5-bisphosphate + O2 = 2-phosphoglycolate + (2R)-3-phosphoglycerate + 2 H(+). In terms of biological role, ruBisCO catalyzes two reactions: the carboxylation of D-ribulose 1,5-bisphosphate, the primary event in carbon dioxide fixation, as well as the oxidative fragmentation of the pentose substrate in the photorespiration process. Both reactions occur simultaneously and in competition at the same active site. This is Ribulose bisphosphate carboxylase large chain from Passiflora quadrangularis (Grenadine).